Consider the following 351-residue polypeptide: Cytoplasmic dynein 2 light intermediate chain 1 (351 aa).

Residues 303–335 (GTLKAVQDPARDPQYAESEVDEMRVQKDQELEH) form a disordered region. The span at 323–335 (DEMRVQKDQELEH) shows a compositional bias: basic and acidic residues.

This sequence belongs to the dynein light intermediate chain family. As to quaternary structure, light intermediate chain of the cytoplasmic dynein complex 2, a multisubunit complex composed at least of eleven different proteins. The cytoplasmic dynein 2 complex consists of two catalytic heavy chains (HCs) and a number of non-catalytic subunits presented by intermediate chains (ICs), light intermediate chains (LICs) and light chains (LCs). Among them, a heavy chain (DYNC2H1), two intermediate chains (DYNC2I2 and DYNC2I1), a light intermediate chain (DYNC2LI1), and a light chain (DYNLT2B) are unique to the dynein-2 complex, but a subset of light chains are also shared by dynein-1 and dynein-2 complexes. Dynein-2 complex is built around two copies of cytoplasmic dynein 2 heavy chain 1 (DYNC2H1). The C-terminal region forms the motor domain, which converts the energy from ATP hydrolysis into movement. Its N-terminal region forms the tail, an extended structure that binds the other subunits and holds the two heavy chains in a homodimer. Interacts with DYNC2H1 (via N-terminus); this interaction stabilizes the dynein-2 complex structure. Specifically expressed by ciliated cells in brain, lung, spleen, testis and kidney (at protein level). Enriched in the ependymal layer lining the lateral ventricles (at protein level).

It is found in the cytoplasm. The protein localises to the cell projection. Its subcellular location is the cilium. The protein resides in the cytoskeleton. It localises to the cilium basal body. It is found in the cilium axoneme. The protein localises to the microtubule organizing center. Its subcellular location is the centrosome. Its function is as follows. Acts as one of several non-catalytic accessory components of the cytoplasmic dynein 2 complex (dynein-2 complex), a motor protein complex that drives the movement of cargos along microtubules within cilia and flagella in concert with the intraflagellar transport (IFT) system, facilitating the assembly of these organelles. Involved in the regulation of ciliary length. The polypeptide is Cytoplasmic dynein 2 light intermediate chain 1 (Dync2li1) (Mus musculus (Mouse)).